Here is a 171-residue protein sequence, read N- to C-terminus: MSHYSMIDTYFSLDEDETETYLYLCRDLLKNKGEFQCTRDAFKFLSDYACLSAANQMELLFRVGRLDLIRRIFGQTWTPDSCPRYYMPICSPFRCLMALVNDFLSDKEVEEMYFLCAPRLESHLEPGSKKSFLRLASLLEDLELLGGDKLTFLRHLLTTIGRADLVKNLQV.

DED domains follow at residues 1-74 (MSHY…RIFG) and 92-171 (PFRC…NLQV).

Associates with the death-inducing signaling complex (DISC) formed by TNFRSF6, FADD and caspase-8. Interacts with FADD.

Functionally, inhibits TNFRSF1A, TNFRSF6, TNFRSF10 and TNFRSF12 induced apoptosis. May interfere with caspase-8 recruitment and activation at the death-inducing signaling complex (DISC). May lead to higher virus production and contribute to virus persistence and oncogenicity. The chain is Viral CASP8 and FADD-like apoptosis regulator from Equus caballus (Horse).